The primary structure comprises 196 residues: Imidazoleglycerol-phosphate dehydratase (196 aa).

The protein belongs to the imidazoleglycerol-phosphate dehydratase family.

It localises to the cytoplasm. It carries out the reaction D-erythro-1-(imidazol-4-yl)glycerol 3-phosphate = 3-(imidazol-4-yl)-2-oxopropyl phosphate + H2O. It participates in amino-acid biosynthesis; L-histidine biosynthesis; L-histidine from 5-phospho-alpha-D-ribose 1-diphosphate: step 6/9. In Solidesulfovibrio magneticus (strain ATCC 700980 / DSM 13731 / RS-1) (Desulfovibrio magneticus), this protein is Imidazoleglycerol-phosphate dehydratase.